We begin with the raw amino-acid sequence, 132 residues long: D-ribose pyranase (132 aa).

Residue H20 is the Proton donor of the active site. Substrate is bound by residues D28, H98, and 120-122 (YAN).

It belongs to the RbsD / FucU family. RbsD subfamily. As to quaternary structure, homodecamer.

It localises to the cytoplasm. The catalysed reaction is beta-D-ribopyranose = beta-D-ribofuranose. It functions in the pathway carbohydrate metabolism; D-ribose degradation; D-ribose 5-phosphate from beta-D-ribopyranose: step 1/2. Catalyzes the interconversion of beta-pyran and beta-furan forms of D-ribose. The sequence is that of D-ribose pyranase from Geobacillus thermodenitrificans (strain NG80-2).